The primary structure comprises 325 residues: Undecaprenyl-phosphate 4-deoxy-4-formamido-L-arabinose transferase (325 aa).

Helical transmembrane passes span Leu-235–Val-255 and Val-269–Gly-291.

The protein belongs to the glycosyltransferase 2 family.

The protein resides in the cell inner membrane. The catalysed reaction is UDP-4-deoxy-4-formamido-beta-L-arabinose + di-trans,octa-cis-undecaprenyl phosphate = 4-deoxy-4-formamido-alpha-L-arabinopyranosyl di-trans,octa-cis-undecaprenyl phosphate + UDP. It functions in the pathway glycolipid biosynthesis; 4-amino-4-deoxy-alpha-L-arabinose undecaprenyl phosphate biosynthesis; 4-amino-4-deoxy-alpha-L-arabinose undecaprenyl phosphate from UDP-4-deoxy-4-formamido-beta-L-arabinose and undecaprenyl phosphate: step 1/2. The protein operates within bacterial outer membrane biogenesis; lipopolysaccharide biosynthesis. In terms of biological role, catalyzes the transfer of 4-deoxy-4-formamido-L-arabinose from UDP to undecaprenyl phosphate. The modified arabinose is attached to lipid A and is required for resistance to polymyxin and cationic antimicrobial peptides. Essential for virulence in insects. This is Undecaprenyl-phosphate 4-deoxy-4-formamido-L-arabinose transferase from Photorhabdus laumondii subsp. laumondii (strain DSM 15139 / CIP 105565 / TT01) (Photorhabdus luminescens subsp. laumondii).